The following is a 674-amino-acid chain: Transcription activator of gluconeogenesis PMAA_028970 (674 aa).

The disordered stretch occupies residues 1-46; sequence MMDTDKDDLPSATDHSEHESGDAVKVEGGASKTASNSKDPSRPRRK. Over residues 14-25 the composition is skewed to basic and acidic residues; that stretch reads DHSEHESGDAVK. The segment at residues 52-80 is a DNA-binding region (zn(2)-C6 fungal-type); the sequence is CFACQRAHLTCGDERPCQRCIKRGLQDAC. 4 disordered regions span residues 117–181, 250–321, 344–374, and 519–557; these read ISPT…ATPA, TGAG…SGLY, IGSN…SPMK, and NLNV…PGPN. Polar residues predominate over residues 120–148; that stretch reads TEYTQNGTNNAQQQQQKSGTIYASSTPSY. Over residues 149–163 the composition is skewed to low complexity; that stretch reads NNNNGTFDTNNATNT. Composition is skewed to polar residues over residues 269-278 and 285-294; these read GQRSNSQQFG and TTESPSQQSF. 2 stretches are compositionally biased toward low complexity: residues 348-366 and 529-540; these read TFAS…IAPS and NTSSQSDSTSSS.

Belongs to the ERT1/acuK family.

It is found in the nucleus. Functionally, transcription factor which regulates nonfermentable carbon utilization. Activator of gluconeogenetic genes. This is Transcription activator of gluconeogenesis PMAA_028970 from Talaromyces marneffei (strain ATCC 18224 / CBS 334.59 / QM 7333) (Penicillium marneffei).